Here is a 201-residue protein sequence, read N- to C-terminus: Transgelin (201 aa).

At A2 the chain carries N-acetylalanine. The Calponin-homology (CH) domain occupies 24 to 137 (EELEERLVEW…RTLMALGSLA (114 aa)). A Phosphoserine modification is found at S166. Residue K172 is modified to N6-acetyllysine. The stretch at 175–200 (IGLQMGSNRGASQAGMTGYGRPRQII) is one Calponin-like repeat. S181 carries the post-translational modification Phosphoserine. At R183 the chain carries Omega-N-methylarginine.

The protein belongs to the calponin family.

It is found in the cytoplasm. Actin cross-linking/gelling protein. Involved in calcium interactions and contractile properties of the cell that may contribute to replicative senescence. This chain is Transgelin (TAGLN), found in Homo sapiens (Human).